We begin with the raw amino-acid sequence, 306 residues long: Large ribosomal subunit protein uL18 (306 aa).

The protein belongs to the universal ribosomal protein uL18 family. Component of the large ribosomal subunit (LSU).

It localises to the cytoplasm. The protein resides in the nucleus. Functionally, component of the ribosome, a large ribonucleoprotein complex responsible for the synthesis of proteins in the cell. The small ribosomal subunit (SSU) binds messenger RNAs (mRNAs) and translates the encoded message by selecting cognate aminoacyl-transfer RNA (tRNA) molecules. The large subunit (LSU) contains the ribosomal catalytic site termed the peptidyl transferase center (PTC), which catalyzes the formation of peptide bonds, thereby polymerizing the amino acids delivered by tRNAs into a polypeptide chain. The nascent polypeptides leave the ribosome through a tunnel in the LSU and interact with protein factors that function in enzymatic processing, targeting, and the membrane insertion of nascent chains at the exit of the ribosomal tunnel. This Theileria annulata protein is Large ribosomal subunit protein uL18 (RPL5).